The chain runs to 328 residues: uncharacterized protein (328 aa).

Residues 37–179 (LTEKLLCHQG…AMTLLRCRKI (143 aa)) enclose the SIS domain. 52–57 (GIGKSG) provides a ligand contact to ATP. 2 consecutive CBS domains span residues 207-264 (PRTE…GGDI) and 273-328 (MTRN…AGLL).

Belongs to the SIS family. GutQ/KpsF subfamily.

This is an uncharacterized protein from Chlamydia trachomatis serovar D (strain ATCC VR-885 / DSM 19411 / UW-3/Cx).